The sequence spans 384 residues: Mannitol-1-phosphate 5-dehydrogenase (384 aa).

3–14 (AVHFGAGNIGRG) is an NAD(+) binding site.

It belongs to the mannitol dehydrogenase family.

It carries out the reaction D-mannitol 1-phosphate + NAD(+) = beta-D-fructose 6-phosphate + NADH + H(+). The polypeptide is Mannitol-1-phosphate 5-dehydrogenase (Arthrobacter sp. (strain FB24)).